Consider the following 179-residue polypeptide: Large ribosomal subunit protein uL6 (179 aa).

It belongs to the universal ribosomal protein uL6 family. In terms of assembly, part of the 50S ribosomal subunit.

This protein binds to the 23S rRNA, and is important in its secondary structure. It is located near the subunit interface in the base of the L7/L12 stalk, and near the tRNA binding site of the peptidyltransferase center. The chain is Large ribosomal subunit protein uL6 from Bifidobacterium longum subsp. infantis (strain ATCC 15697 / DSM 20088 / JCM 1222 / NCTC 11817 / S12).